The primary structure comprises 99 residues: Large ribosomal subunit protein uL23 (99 aa).

Belongs to the universal ribosomal protein uL23 family. Part of the 50S ribosomal subunit. Contacts protein L29, and trigger factor when it is bound to the ribosome.

Its function is as follows. One of the early assembly proteins it binds 23S rRNA. One of the proteins that surrounds the polypeptide exit tunnel on the outside of the ribosome. Forms the main docking site for trigger factor binding to the ribosome. The polypeptide is Large ribosomal subunit protein uL23 (Shewanella woodyi (strain ATCC 51908 / MS32)).